A 295-amino-acid chain; its full sequence is Protoheme IX farnesyltransferase (295 aa).

9 consecutive transmembrane segments (helical) span residues 8–28, 35–55, 83–103, 107–127, 132–152, 162–182, 208–228, 229–249, and 263–283; these read ITKP…FFLA, GGLF…GCVF, GVTL…LWFG, LATA…SLYL, IYGT…GYCA, LTLL…IAIF, IFWY…GGYA, GYGY…MALR, and VFIF…IDFQ.

Belongs to the UbiA prenyltransferase family. Protoheme IX farnesyltransferase subfamily.

The protein resides in the cell inner membrane. The enzyme catalyses heme b + (2E,6E)-farnesyl diphosphate + H2O = Fe(II)-heme o + diphosphate. It participates in porphyrin-containing compound metabolism; heme O biosynthesis; heme O from protoheme: step 1/1. Functionally, converts heme B (protoheme IX) to heme O by substitution of the vinyl group on carbon 2 of heme B porphyrin ring with a hydroxyethyl farnesyl side group. This Chromohalobacter salexigens (strain ATCC BAA-138 / DSM 3043 / CIP 106854 / NCIMB 13768 / 1H11) protein is Protoheme IX farnesyltransferase.